We begin with the raw amino-acid sequence, 202 residues long: Small ribosomal subunit protein uS4c (202 aa).

Residues 90–158 enclose the S4 RNA-binding domain; the sequence is MRLDNIIFRL…MKRSRDSYEK (69 aa).

This sequence belongs to the universal ribosomal protein uS4 family. Part of the 30S ribosomal subunit. Contacts protein S5. The interaction surface between S4 and S5 is involved in control of translational fidelity.

The protein resides in the plastid. It localises to the chloroplast. In terms of biological role, one of the primary rRNA binding proteins, it binds directly to 16S rRNA where it nucleates assembly of the body of the 30S subunit. Functionally, with S5 and S12 plays an important role in translational accuracy. The sequence is that of Small ribosomal subunit protein uS4c (rps4) from Anthoceros angustus (Hornwort).